A 633-amino-acid polypeptide reads, in one-letter code: DEAD-box ATP-dependent RNA helicase 27 (633 aa).

Residues 1–17 (MANLDMEQHSSENEEIK) are compositionally biased toward basic and acidic residues. Residues 1-147 (MANLDMEQHS…DKEEEKKLEE (147 aa)) form a disordered region. Residues 2-34 (ANLDMEQHSSENEEIKKKKHKKRARDEAKKLKQ) are a coiled coil. 2 stretches are compositionally biased toward acidic residues: residues 37 to 47 (MEEEPDHEDGD) and 74 to 83 (DDGEDEAVAE). The segment covering 88 to 97 (KKKKKNKKLQ) has biased composition (basic residues). Acidic residues-rich tracts occupy residues 103–114 (NDEEDEVIAEEE) and 131–140 (SEEEEVEDKE). Residues 117–153 (KKKKKKQRKDTEAKSEEEEVEDKEEEKKLEETSIMTN) adopt a coiled-coil conformation. The Q motif signature appears at 154 to 182 (KTFESLSLSDNTYKSIKEMGFARMTQIQA). One can recognise a Helicase ATP-binding domain in the interval 185-360 (IPPLMMGEDV…RVSLTSPVYI (176 aa)). 198–205 (ARTGSGKT) is a binding site for ATP. Positions 308–311 (DEAD) match the DEAD box motif. Residues 386 to 534 (RLLFLLTFLK…EHEFEEKKLL (149 aa)) form the Helicase C-terminal domain. A disordered region spans residues 608 to 633 (KREPVNKFKRGRGGGRPGGKSKFERY).

It belongs to the DEAD box helicase family. DDX18/HAS1 subfamily.

It catalyses the reaction ATP + H2O = ADP + phosphate + H(+). This chain is DEAD-box ATP-dependent RNA helicase 27 (RH27), found in Arabidopsis thaliana (Mouse-ear cress).